Reading from the N-terminus, the 394-residue chain is Elongation factor Tu (394 aa).

Residues 10–204 enclose the tr-type G domain; that stretch reads KPHLNVGTIG…ALDTYIPLPE (195 aa). Residues 19–26 form a G1 region; sequence GHVDHGKT. 19–26 lines the GTP pocket; it reads GHVDHGKT. T26 contacts Mg(2+). Residues 60-64 are G2; it reads GITIN. Residues 81 to 84 form a G3 region; it reads DCPG. Residues 81–85 and 136–139 contribute to the GTP site; these read DCPGH and NKCD. The tract at residues 136 to 139 is G4; sequence NKCD. A G5 region spans residues 174–176; the sequence is SAL.

This sequence belongs to the TRAFAC class translation factor GTPase superfamily. Classic translation factor GTPase family. EF-Tu/EF-1A subfamily. Monomer.

The protein resides in the cytoplasm. It carries out the reaction GTP + H2O = GDP + phosphate + H(+). Its function is as follows. GTP hydrolase that promotes the GTP-dependent binding of aminoacyl-tRNA to the A-site of ribosomes during protein biosynthesis. The chain is Elongation factor Tu from Psychromonas ingrahamii (strain DSM 17664 / CCUG 51855 / 37).